Consider the following 307-residue polypeptide: Malonyl-[acyl-carrier protein] O-methyltransferase (307 aa).

The protein belongs to the methyltransferase superfamily.

It carries out the reaction malonyl-[ACP] + S-adenosyl-L-methionine = malonyl-[ACP] methyl ester + S-adenosyl-L-homocysteine. It functions in the pathway cofactor biosynthesis; biotin biosynthesis. Functionally, converts the free carboxyl group of a malonyl-thioester to its methyl ester by transfer of a methyl group from S-adenosyl-L-methionine (SAM). It allows to synthesize pimeloyl-ACP via the fatty acid synthetic pathway. The polypeptide is Malonyl-[acyl-carrier protein] O-methyltransferase (Nitrosospira multiformis (strain ATCC 25196 / NCIMB 11849 / C 71)).